Here is a 677-residue protein sequence, read N- to C-terminus: Methionine--tRNA ligase (677 aa).

A 'HIGH' region motif is present at residues 15–25; sequence PYANGSIHLGH. Positions 146, 149, 159, and 162 each coordinate Zn(2+). Positions 333–337 match the 'KMSKS' region motif; it reads KMSKS. Residue Lys-336 coordinates ATP. The 103-residue stretch at 575–677 folds into the tRNA-binding domain; sequence DFAKVDLRVA…DGAKPGQQVK (103 aa).

This sequence belongs to the class-I aminoacyl-tRNA synthetase family. MetG type 1 subfamily. Homodimer. Requires Zn(2+) as cofactor.

It localises to the cytoplasm. It catalyses the reaction tRNA(Met) + L-methionine + ATP = L-methionyl-tRNA(Met) + AMP + diphosphate. Is required not only for elongation of protein synthesis but also for the initiation of all mRNA translation through initiator tRNA(fMet) aminoacylation. This Salmonella schwarzengrund (strain CVM19633) protein is Methionine--tRNA ligase.